The primary structure comprises 346 residues: Phosphoribosylformylglycinamidine cyclo-ligase (346 aa).

It belongs to the AIR synthase family.

The protein resides in the cytoplasm. The enzyme catalyses 2-formamido-N(1)-(5-O-phospho-beta-D-ribosyl)acetamidine + ATP = 5-amino-1-(5-phospho-beta-D-ribosyl)imidazole + ADP + phosphate + H(+). Its pathway is purine metabolism; IMP biosynthesis via de novo pathway; 5-amino-1-(5-phospho-D-ribosyl)imidazole from N(2)-formyl-N(1)-(5-phospho-D-ribosyl)glycinamide: step 2/2. The protein is Phosphoribosylformylglycinamidine cyclo-ligase of Prochlorococcus marinus (strain NATL1A).